We begin with the raw amino-acid sequence, 89 residues long: Mapacalcine (89 aa).

Glutamine 89 is subject to Glutamine amide.

As to quaternary structure, homodimer. Post-translationally, contains disulfide bonds which may also be involved in dimerization.

Its function is as follows. Blocks calcium currents via interaction with a yet unknown target protein. Has no effect on L-type, T-type, N-type or P/Q-type voltage-gated calcium channels (VGCC). Has no effect on voltage-gated potassium or chloride channels. Blocks non-L-type VGCC calcium currents in mouse duodenal myocytes (IC(50)=0.2 uM). Blocks calcium influx induced by hypoxia/reoxygenation in rat hepatocytes. The protein is Mapacalcine of Pione vastifica (Boring sponge).